The chain runs to 33 residues: Photosystem II reaction center protein Psb30 (33 aa).

The chain crosses the membrane as a helical span at residues 5–25; that stretch reads LIVQLTSLALITLAGPLIVAL.

This sequence belongs to the Psb30/Ycf12 family. As to quaternary structure, PSII is composed of 1 copy each of membrane proteins PsbA, PsbB, PsbC, PsbD, PsbE, PsbF, PsbH, PsbI, PsbJ, PsbK, PsbL, PsbM, PsbT, PsbY, PsbZ, Psb30/Ycf12, peripheral proteins of the oxygen-evolving complex and a large number of cofactors. It forms dimeric complexes.

The protein resides in the plastid. Its subcellular location is the chloroplast thylakoid membrane. A core subunit of photosystem II (PSII), probably helps stabilize the reaction center. The polypeptide is Photosystem II reaction center protein Psb30 (Euglena sanguinea).